The following is a 79-amino-acid chain: MKMNPCTVILCKSLFFFCLFQVDCYCNRKNIQNQSSRIATKIKRSYWFRWQKHIILANIHKIIKAYQRSIIKLPVTKGL.

The signal sequence occupies residues 1–24; it reads MKMNPCTVILCKSLFFFCLFQVDC. Residue asparagine 33 is glycosylated (N-linked (GlcNAc...) asparagine).

It is found in the secreted. This is an uncharacterized protein from Saccharomyces cerevisiae (strain ATCC 204508 / S288c) (Baker's yeast).